Consider the following 203-residue polypeptide: Thymidylate kinase (203 aa).

An ATP-binding site is contributed by 7-14 (GGEGAGKT).

Belongs to the thymidylate kinase family.

The enzyme catalyses dTMP + ATP = dTDP + ADP. Its function is as follows. Phosphorylation of dTMP to form dTDP in both de novo and salvage pathways of dTTP synthesis. The polypeptide is Thymidylate kinase (tmk) (Chlamydia trachomatis serovar D (strain ATCC VR-885 / DSM 19411 / UW-3/Cx)).